We begin with the raw amino-acid sequence, 455 residues long: 3-isopropylmalate dehydratase large subunit (455 aa).

Residues C336, C396, and C399 each coordinate [4Fe-4S] cluster.

Belongs to the aconitase/IPM isomerase family. LeuC type 1 subfamily. In terms of assembly, heterodimer of LeuC and LeuD. [4Fe-4S] cluster serves as cofactor.

It carries out the reaction (2R,3S)-3-isopropylmalate = (2S)-2-isopropylmalate. Its pathway is amino-acid biosynthesis; L-leucine biosynthesis; L-leucine from 3-methyl-2-oxobutanoate: step 2/4. In terms of biological role, catalyzes the isomerization between 2-isopropylmalate and 3-isopropylmalate, via the formation of 2-isopropylmaleate. The chain is 3-isopropylmalate dehydratase large subunit from Staphylococcus aureus (strain MRSA252).